Reading from the N-terminus, the 115-residue chain is Holo-[acyl-carrier-protein] synthase (115 aa).

Mg(2+)-binding residues include Asp5 and Glu50.

The protein belongs to the P-Pant transferase superfamily. AcpS family. Requires Mg(2+) as cofactor.

The protein resides in the cytoplasm. The enzyme catalyses apo-[ACP] + CoA = holo-[ACP] + adenosine 3',5'-bisphosphate + H(+). Functionally, transfers the 4'-phosphopantetheine moiety from coenzyme A to a Ser of acyl-carrier-protein. In Campylobacter fetus subsp. fetus (strain 82-40), this protein is Holo-[acyl-carrier-protein] synthase.